The sequence spans 516 residues: GMP synthase [glutamine-hydrolyzing] (516 aa).

A Glutamine amidotransferase type-1 domain is found at P5 to K199. C82 functions as the Nucleophile in the catalytic mechanism. Residues H173 and E175 contribute to the active site. The GMPS ATP-PPase domain maps to W200–R391. An ATP-binding site is contributed by S227 to S233.

In terms of assembly, homodimer.

It carries out the reaction XMP + L-glutamine + ATP + H2O = GMP + L-glutamate + AMP + diphosphate + 2 H(+). It participates in purine metabolism; GMP biosynthesis; GMP from XMP (L-Gln route): step 1/1. Catalyzes the synthesis of GMP from XMP. The sequence is that of GMP synthase [glutamine-hydrolyzing] from Nitratiruptor sp. (strain SB155-2).